A 101-amino-acid chain; its full sequence is Enhancer of yellow 2 transcription factor (101 aa).

It belongs to the ENY2 family. As to quaternary structure, component of the nuclear pore complex (NPC)-associated TREX-2/AMEX complex (anchoring and mRNA export complex), composed of e(y)2, xmas and PCID2. Within the TREX-2/ AMEX complex, interactions with xmas is required for localization to the nuclear periphery. Component of the SAGA transcription coactivator-HAT complexes, at least composed of Ada2b, e(y)2, Pcaf/Gcn5, Taf10 and Nipped-A/Trrap. Within the SAGA complex, e(y)2, Sgf11, and not/nonstop form an additional subcomplex of SAGA called the DUB module (deubiquitination module). Component of the THO complex, composed of at least e(y)2, HPR1, THO2, THOC5, THOC6 and THOC7. Interacts with Taf9. Interacts with su(Hw) (via zinc fingers). Interacts with the nuclear pore complex (NPC). Interaction between the TREX-2/AMEX complex and the ORC complex is required for ORC localization to mRNPs, and consequently mRNA export. Within the TREX-2/AMEX-ORC complex, interacts with Orc6 and (via N-terminus or C-terminus) with Orc3. Interacts with the zinc finger protein CG9890. In terms of tissue distribution, ubiquitous.

It localises to the nucleus. It is found in the nucleoplasm. The protein localises to the cytoplasm. The protein resides in the nucleus membrane. Its function is as follows. Involved in mRNA export coupled transcription activation by association with both the TREX-2/AMEX and the SAGA complexes. The SAGA complex is a multiprotein complex that activates transcription by remodeling chromatin and mediating histone acetylation and deubiquitination. Within the SAGA complex, participates in a subcomplex that specifically deubiquitinates histone H2B. The SAGA complex is recruited to specific gene promoters by activators, where it is required for transcription. Required for nuclear receptor-mediated transactivation. Involved in transcription elongation by recruiting the THO complex onto nascent mRNA. The TREX-2/AMEX complex functions in docking export-competent ribonucleoprotein particles (mRNPs) to the nuclear entrance of the nuclear pore complex (nuclear basket). TREX-2/AMEX participates in mRNA export and accurate chromatin positioning in the nucleus by tethering genes to the nuclear periphery. Recruited to the su(Hw) insulators via its interaction with su(Hw) and participates in the barrier activity of such insulators. In contrast, it does not participate in the enhancer-blocking activity of the su(Hw) insulators. The sequence is that of Enhancer of yellow 2 transcription factor from Drosophila melanogaster (Fruit fly).